Consider the following 193-residue polypeptide: Protein GrpE (193 aa).

The disordered stretch occupies residues 1 to 40; sequence MTEENRPQPDQPELTVTSESSVQETGENKARTPEQEGEAM. The span at 14–25 shows a compositional bias: polar residues; it reads LTVTSESSVQET.

The protein belongs to the GrpE family. As to quaternary structure, homodimer.

The protein localises to the cytoplasm. Functionally, participates actively in the response to hyperosmotic and heat shock by preventing the aggregation of stress-denatured proteins, in association with DnaK and GrpE. It is the nucleotide exchange factor for DnaK and may function as a thermosensor. Unfolded proteins bind initially to DnaJ; upon interaction with the DnaJ-bound protein, DnaK hydrolyzes its bound ATP, resulting in the formation of a stable complex. GrpE releases ADP from DnaK; ATP binding to DnaK triggers the release of the substrate protein, thus completing the reaction cycle. Several rounds of ATP-dependent interactions between DnaJ, DnaK and GrpE are required for fully efficient folding. The chain is Protein GrpE from Nitrosospira multiformis (strain ATCC 25196 / NCIMB 11849 / C 71).